Reading from the N-terminus, the 537-residue chain is Probable protein kinase UbiB (537 aa).

A helical membrane pass occupies residues 30–47; sequence LLPWWLRALGYLLPWRWL. The Protein kinase domain maps to 126-490; that stretch reads RFDSEPLASA…KRERHDHHLL (365 aa). ATP contacts are provided by residues 132 to 140 and Lys-154; that span reads LASASVAQV. Asp-289 acts as the Proton acceptor in catalysis. The next 2 membrane-spanning stretches (helical) occupy residues 489-507 and 513-530; these read LLRLLGAALLAGGVLLALQ and ANAWPSWLMLASGLYLLV.

Belongs to the ABC1 family. UbiB subfamily.

Its subcellular location is the cell inner membrane. It functions in the pathway cofactor biosynthesis; ubiquinone biosynthesis [regulation]. Functionally, is probably a protein kinase regulator of UbiI activity which is involved in aerobic coenzyme Q (ubiquinone) biosynthesis. This Azotobacter vinelandii (strain DJ / ATCC BAA-1303) protein is Probable protein kinase UbiB.